Here is a 277-residue protein sequence, read N- to C-terminus: Putative phosphoenolpyruvate synthase regulatory protein (277 aa).

Residue 157-164 participates in ADP binding; the sequence is GVSRCGKT.

The protein belongs to the pyruvate, phosphate/water dikinase regulatory protein family. PSRP subfamily.

The catalysed reaction is [pyruvate, water dikinase] + ADP = [pyruvate, water dikinase]-phosphate + AMP + H(+). It carries out the reaction [pyruvate, water dikinase]-phosphate + phosphate + H(+) = [pyruvate, water dikinase] + diphosphate. Bifunctional serine/threonine kinase and phosphorylase involved in the regulation of the phosphoenolpyruvate synthase (PEPS) by catalyzing its phosphorylation/dephosphorylation. The polypeptide is Putative phosphoenolpyruvate synthase regulatory protein (Cronobacter sakazakii (strain ATCC BAA-894) (Enterobacter sakazakii)).